The primary structure comprises 394 residues: MSKEKFERTKPHVNVGTIGHVDHGKTTLTAAITTVLSKHFGGAARAFDQIDNAPEEKARGITINTSHVEYDTATRHYAHVDCPGHADYVKNMITGAAQMDGAILVVAATDGPMPQTREHILLGRQVGVPYIIVFLNKCDMVDDEELLELVEMEVRELLSQYDFPGDDTPIVRGSALQALNGVAEWEEKILELASHLDNYIPEPERAIDQPFLLPIEDVFSISGRGTVVTGRVERGIIRTGEEVEIVGIKETTKTTVTGVEMFRKLLDEGRAGENIGALLRGTKREEIERGQVLAKPGSITPHTDFESEVYVLSKEEGGRHTPFFKGYRPQFYFRTTDVTGTIELPEGVEMVMPGDNIKMTVSLIHPIAMDQGLRFAIREGGRTVGAGVVAKIIK.

A tr-type G domain is found at 10–204 (KPHVNVGTIG…HLDNYIPEPE (195 aa)). Positions 19-26 (GHVDHGKT) are G1. GTP is bound at residue 19–26 (GHVDHGKT). Residue T26 participates in Mg(2+) binding. Residues 60–64 (GITIN) form a G2 region. A G3 region spans residues 81–84 (DCPG). GTP-binding positions include 81–85 (DCPGH) and 136–139 (NKCD). A G4 region spans residues 136-139 (NKCD). Positions 174 to 176 (SAL) are G5.

Belongs to the TRAFAC class translation factor GTPase superfamily. Classic translation factor GTPase family. EF-Tu/EF-1A subfamily. As to quaternary structure, monomer.

Its subcellular location is the cytoplasm. It catalyses the reaction GTP + H2O = GDP + phosphate + H(+). GTP hydrolase that promotes the GTP-dependent binding of aminoacyl-tRNA to the A-site of ribosomes during protein biosynthesis. This is Elongation factor Tu from Histophilus somni (strain 129Pt) (Haemophilus somnus).